Here is a 487-residue protein sequence, read N- to C-terminus: Zinc finger and BTB domain-containing protein 32 (487 aa).

The BTB domain maps to 29 to 87 (CDTLITVGGQEFPAHSLVLAGVSQQLGRRGQWALGEGISPSTFAQLLNFVYGESVELQP). Residues 113-166 (RGDRAKKPDPGLKKHQEEPEKPSRNAERELGDPGEKQKPEQVSRTGGREQEMLH) are compositionally biased toward basic and acidic residues. Disordered stretches follow at residues 113–208 (RGDR…ADGK) and 308–371 (QNQL…ARSR). The segment covering 308 to 320 (QNQLASSSPTPGS) has biased composition (polar residues). Residues 357–369 (PPRPHPPPAPPAR) are compositionally biased toward pro residues. C2H2-type zinc fingers lie at residues 373–395 (YACS…YRVH), 401–423 (FSCS…LRTH), and 428–450 (YRXX…MRGH). The segment at 468 to 487 (SSSRPSRPSTSPCCPSSSTT) is disordered.

This sequence belongs to the krueppel C2H2-type zinc-finger protein family. Homodimer (via PTB domain). Interacts with the N-terminal of FANCC. Interacts with ZBTB16. Interacts with GATA3.

The protein localises to the nucleus. Functionally, DNA-binding protein that binds to the to a 5'-TGTACAGTGT-3' core sequence. May function as a transcriptional transactivator and transcriptional repressor. Probably exerts its repressor effect by preventing GATA3 from binding to DNA. May play a role in regulating the differentiation and activation of helper T-cells. This chain is Zinc finger and BTB domain-containing protein 32 (ZBTB32), found in Pan troglodytes (Chimpanzee).